We begin with the raw amino-acid sequence, 337 residues long: P2Y purinoceptor 14 (337 aa).

At 1-28 (MNATSVPPAEGSCPSNALITKQIIPMLY) the chain is on the extracellular side. Asn-2 carries an N-linked (GlcNAc...) asparagine glycan. A helical transmembrane segment spans residues 29–49 (FVVFVAGILLNGMSGWVFFYV). Over 50–54 (PSSKS) the chain is Cytoplasmic. A helical membrane pass occupies residues 55–75 (FIVYLKNIVIADFLMSLTFPF). The Extracellular portion of the chain corresponds to 76–95 (KILGDLGLGLWQVKVFVCRV). Cys-93 and Cys-171 are joined by a disulfide. The helical transmembrane segment at 96–116 (SAVLFYINMYVSIVFFGLIGF) threads the bilayer. The Cytoplasmic segment spans residues 117-138 (DRYYKIVKPLLTSFIQSISYSK). The helical transmembrane segment at 139 to 159 (LLSVLVWSLTLLIALPNMILT) threads the bilayer. Residues 160 to 187 (NRNVTEATRVKCMDLKSDLGLKWHKASS) lie on the Extracellular side of the membrane. N-linked (GlcNAc...) asparagine glycosylation is present at Asn-162. The chain crosses the membrane as a helical span at residues 188-208 (YIFVGIFWIVFLSLIIFYTAI). The Cytoplasmic segment spans residues 209-233 (TKKIFKSHFKSRKNSVSVKKKSSRN). Residues 234 to 254 (IFSIMFVFFICFVPYHIARIP) traverse the membrane as a helical segment. Topologically, residues 255–277 (YTQSQTEAHYSCQSKQILFYVKE) are extracellular. A helical membrane pass occupies residues 278–298 (FSLLLSAANVCLDPIIYFFLC). Residues 299–337 (QPFREVLCKKLHIQLKTQHDSETSKIKRENIIQESTDTL) lie on the Cytoplasmic side of the membrane.

It belongs to the G-protein coupled receptor 1 family.

The protein localises to the cell membrane. Its function is as follows. Receptor for UDP-glucose and other UDP-sugar coupled to G-proteins. Not activated by ATP, ADP, UTP or ATP. The chain is P2Y purinoceptor 14 (P2RY14) from Bos taurus (Bovine).